The sequence spans 462 residues: Metal cation symporter ZIP8 (462 aa).

The N-terminal stretch at 1 to 19 is a signal peptide; sequence MAPGRAVAGLLLLAATGLG. Topologically, residues 20–132 are extracellular; that stretch reads RPSEGPELAF…PSFSEVWGYG (113 aa). N-linked (GlcNAc...) asparagine glycans are attached at residues Asn40, Asn88, and Asn96. The chain crosses the membrane as a helical span at residues 133-153; it reads FLSVTIINLASLLGLILTPLI. Residues 154-160 are Cytoplasmic-facing; the sequence is KKSYFPK. Residues 161 to 181 traverse the membrane as a helical segment; that stretch reads ILTYFVGLAIGTLFSNAIFQL. Residues 182–191 lie on the Extracellular side of the membrane; sequence IPEAFGFNPK. The chain crosses the membrane as a helical span at residues 192-212; it reads IDNYVEKAVAVFGGFYMLFFV. At 213–367 the chain is on the cytoplasmic side; the sequence is ERTLKMLLKT…LNAGMSTRQA (155 aa). Residues 345–350 carry the XEXPHE-motif motif; the sequence is EEFPHE. The chain crosses the membrane as a helical span at residues 368-388; it reads LLFNFLSACSCYVGLAFGILV. The Extracellular portion of the chain corresponds to 389-390; it reads GN. The helical transmembrane segment at 391-411 threads the bilayer; sequence NFAPNIIFALAGGMFLYISLA. Residues 412 to 431 are Cytoplasmic-facing; the sequence is DMFPEMNDMLREKVTGRQTD. A helical membrane pass occupies residues 432 to 452; that stretch reads FTFFMIQNAGMLTGFTAILLI. Residues 453–462 are Extracellular-facing; it reads TLYAGDIELQ.

The protein belongs to the ZIP transporter (TC 2.A.5) family. As to quaternary structure, homodimer. Post-translationally, N-glycosylated. N-glycosylation is not required for proper iron and zinc transport.

It localises to the cell membrane. The protein resides in the lysosome membrane. Its subcellular location is the apical cell membrane. The protein localises to the basolateral cell membrane. The catalysed reaction is Zn(2+)(out) + 2 hydrogencarbonate(out) = Zn(2+)(in) + 2 hydrogencarbonate(in). It catalyses the reaction selenite(out) + Zn(2+)(out) + hydrogencarbonate(out) = selenite(in) + Zn(2+)(in) + hydrogencarbonate(in). It carries out the reaction Mn(2+)(out) + 2 hydrogencarbonate(out) = Mn(2+)(in) + 2 hydrogencarbonate(in). The enzyme catalyses Fe(2+)(out) + 2 hydrogencarbonate(out) = Fe(2+)(in) + 2 hydrogencarbonate(in). The catalysed reaction is Cd(2+)(out) + 2 hydrogencarbonate(out) = Cd(2+)(in) + 2 hydrogencarbonate(in). It catalyses the reaction Co(2+)(out) + 2 hydrogencarbonate(out) = Co(2+)(in) + 2 hydrogencarbonate(in). In terms of biological role, electroneutral divalent metal cation:bicarbonate symporter of the plasma membrane mediating the cellular uptake of zinc and manganese, two divalent metal cations important for development, tissue homeostasis and immunity. Transports an electroneutral complex composed of a divalent metal cation and two bicarbonate anions or alternatively a bicarbonate and a selenite anion. Thereby, it also contributes to the cellular uptake of selenium, an essential trace metal and micronutrient. Also imports cadmium a non-essential metal which is cytotoxic and carcinogenic. May also transport iron and cobalt through membranes. Through zinc import, indirectly regulates the metal-dependent transcription factor MTF1 and the expression of some metalloproteases involved in cartilage catabolism and also probably heart development. Also indirectly regulates the expression of proteins involved in cell morphology and cytoskeleton organization. Indirectly controls innate immune function and inflammatory response by regulating zinc cellular uptake which in turn modulates the expression of genes specific of these processes. Protects, for instance, cells from injury and death at the onset of inflammation. By regulating zinc influx into monocytes also directly modulates their adhesion to endothelial cells and arteries. Reclaims manganese from the bile at the apical membrane of hepatocytes, thereby regulating the activity of the manganese-dependent enzymes through the systemic levels of the nutrient. Also participates in manganese reabsorption in the proximal tubule of the kidney. By mediating the extracellular uptake of manganese by cells of the blood-brain barrier, may also play a role in the transport of the micronutrient to the brain. With manganese cellular uptake also participates in mitochondrial proper function. Finally, also probably functions intracellularly, translocating zinc from lysosome to cytosol to indirectly enhance the expression of specific genes during TCR-mediated T cell activation. The sequence is that of Metal cation symporter ZIP8 from Rattus norvegicus (Rat).